The primary structure comprises 623 residues: DNA mismatch repair protein MutL (623 aa).

Residues alanine 353–serine 368 are compositionally biased toward polar residues. A disordered region spans residues alanine 353 to histidine 389.

The protein belongs to the DNA mismatch repair MutL/HexB family.

Its function is as follows. This protein is involved in the repair of mismatches in DNA. It is required for dam-dependent methyl-directed DNA mismatch repair. May act as a 'molecular matchmaker', a protein that promotes the formation of a stable complex between two or more DNA-binding proteins in an ATP-dependent manner without itself being part of a final effector complex. In Brucella melitensis biotype 2 (strain ATCC 23457), this protein is DNA mismatch repair protein MutL.